A 25-amino-acid polypeptide reads, in one-letter code: Caerin-1.17 (25 aa).

Leucine 25 is modified (leucine amide).

Belongs to the frog skin active peptide (FSAP) family. Caerin subfamily. In terms of tissue distribution, expressed by the skin dorsal glands.

The protein resides in the secreted. In terms of biological role, caerin-1.17 shows significant activity against Gram-positive organisms, but is less effective against Gram-negative organisms. In Ranoidea gracilenta (Dainty green tree frog), this protein is Caerin-1.17.